We begin with the raw amino-acid sequence, 237 residues long: Purine nucleoside phosphorylase DeoD-type (237 aa).

A purine D-ribonucleoside is bound at residue H4. Phosphate is bound by residues G20, R24, R43, and 87–90 (RVGT). A purine D-ribonucleoside contacts are provided by residues 179-181 (EME) and 203-204 (SD). Catalysis depends on D204, which acts as the Proton donor.

This sequence belongs to the PNP/UDP phosphorylase family. Homohexamer; trimer of homodimers.

The catalysed reaction is a purine D-ribonucleoside + phosphate = a purine nucleobase + alpha-D-ribose 1-phosphate. It carries out the reaction a purine 2'-deoxy-D-ribonucleoside + phosphate = a purine nucleobase + 2-deoxy-alpha-D-ribose 1-phosphate. Catalyzes the reversible phosphorolytic breakdown of the N-glycosidic bond in the beta-(deoxy)ribonucleoside molecules, with the formation of the corresponding free purine bases and pentose-1-phosphate. This is Purine nucleoside phosphorylase DeoD-type from Streptococcus uberis (strain ATCC BAA-854 / 0140J).